A 1828-amino-acid chain; its full sequence is Unconventional myosin-Va (1828 aa).

N-acetylalanine is present on Ala2. The Myosin N-terminal SH3-like domain occupies 8–60; that stretch reads TKFARVWIPDPEEVWKSAELLKDYKPGDKVLLLHLEEGKDLEYRLDPKTSELP. A Myosin motor domain is found at 69–763; the sequence is VGENDLTALS…QVAYLEKLRA (695 aa). 163–170 is an ATP binding site; sequence GESGAGKT. Residues 599–633 form a disordered region; the sequence is ISPTSATSSGRTPLTRVPVKPTKGRPGQTAKEHKK. Ser600 is modified (phosphoserine). Residues 600–610 are compositionally biased toward polar residues; that stretch reads SPTSATSSGRT. Residues 643-665 are actin-binding; the sequence is LHLLMETLNATTPHYVRCIKPND. IQ domains lie at 766–788, 789–813, 814–836, 837–861, 862–884, and 885–914; these read LRAACIRIQKTIRGWLLRKRYLC, MQRAAITVQRYVRGYQARCYAKFLR, RTKAATTIQKYWRMYVVRRKYKI, RRAATIVLQSYLRGYLARNRYRKIL, REHKAVIIQKRVRGWLARTHYKR, and TMKAIIYLQCCFRRMMAKRELKKLKIEARS. 2 coiled-coil regions span residues 914-1239 and 1314-1418; these read SVER…EVNA and GLKE…ELEV. Thr1032 carries the post-translational modification Phosphothreonine. The interval 1105–1147 is disordered; that stretch reads VPKPGHKRTDSTHSSNESEYTFSSEFAETEDIAPRTEEPTEKK. A compositionally biased stretch (polar residues) spans 1116–1130; the sequence is THSSNESEYTFSSEF. Basic and acidic residues predominate over residues 1136 to 1147; sequence IAPRTEEPTEKK. Phosphoserine is present on residues Ser1425 and Ser1625. Residues 1507–1783 enclose the Dilute domain; it reads TSTINSIKKV…IRTIQVRLRD (277 aa). At Thr1733 the chain carries Phosphothreonine.

Belongs to the TRAFAC class myosin-kinesin ATPase superfamily. Myosin family. In terms of assembly, may be a homodimer, which associates with multiple calmodulin or myosin light chains. Interacts with RIPL2, the interaction is required for its role in dendrite formation. Interacts with MLPH. Interacts with SYTL4. Interacts with MYRIP. Interacts with RAB10; mediates the transport to the plasma membrane of SLC2A4/GLUT4 storage vesicles. Interacts with FMR1; this interaction occurs in association with polyribosome.

The enzyme catalyses ATP + H2O = ADP + phosphate + H(+). Processive actin-based motor that can move in large steps approximating the 36-nm pseudo-repeat of the actin filament. Can hydrolyze ATP in the presence of actin, which is essential for its function as a motor protein. Involved in melanosome transport. Also mediates the transport of vesicles to the plasma membrane. May also be required for some polarization process involved in dendrite formation. The protein is Unconventional myosin-Va (Myo5a) of Rattus norvegicus (Rat).